The chain runs to 375 residues: MRKHAKKIIRIIKMKLKLVAVAVTSLLAAGVVNAAEVYNKDGNKLDLYGKVHAQHYFSDDNGSDGDKTYARLGFKGETQINDQLTGFGQWEYEFKGNRTESQGADKDKTRLAFAGLKFADYGSFDYGRNYGVAYDIGAWTDVLPEFGGDTWTQTDVFMTGRTTGVATYRNTDFFGLVEGLNFAAQYQGKNDRDGAYESNGDGFGLSATYEYEGFGVGAAYAKSDRTNNQVKAASNLNAAGKNAEVWAAGLKYDANNIYLATTYSETLNMTTFGEDAAGDAFIANKTQNFEAVAQYQFDFGLRPSIAYLKSKGKNLGTYGDQDLVEYIDVGATYYFNKNMSTFVDYKINLLDDSDFTKAAKVSTDNIVAVGLNYQF.

Positions 1–34 (MRKHAKKIIRIIKMKLKLVAVAVTSLLAAGVVNA) are cleaved as a signal peptide.

Belongs to the Gram-negative porin family. Homotrimer. Mixed heterotrimers with other porins are also probable.

The protein resides in the cell outer membrane. Functionally, forms pores that allow passive diffusion of small molecules across the outer membrane. This Salmonella typhimurium (strain SL1344) protein is Outer membrane porin OmpD.